The sequence spans 554 residues: Glutamine--tRNA ligase (554 aa).

The short motif at 34-44 is the 'HIGH' region element; it reads PEPNGYLHIGH. ATP contacts are provided by residues 35–37 and 41–47; these read EPN and HIGHAKS. 2 residues coordinate L-glutamine: aspartate 67 and tyrosine 212. Residues threonine 231, 261–262, and 269–271 each bind ATP; these read RL and MSK. The short motif at 268–272 is the 'KMSKS' region element; the sequence is VMSKR.

It belongs to the class-I aminoacyl-tRNA synthetase family. Monomer.

It is found in the cytoplasm. It catalyses the reaction tRNA(Gln) + L-glutamine + ATP = L-glutaminyl-tRNA(Gln) + AMP + diphosphate. This is Glutamine--tRNA ligase from Shigella boydii serotype 4 (strain Sb227).